Consider the following 377-residue polypeptide: 26S proteasome non-ATPase regulatory subunit 4 (377 aa).

One can recognise a VWFA domain in the interval 5–188; that stretch reads STMVCVDNSE…LADALISSPI (184 aa). Residue K122 forms a Glycyl lysine isopeptide (Lys-Gly) (interchain with G-Cter in SUMO2) linkage. The segment at 197–262 is interaction with UBQLN1; the sequence is LGLGASDFEF…TEDSDDALLK (66 aa). Positions 211 to 230 constitute a UIM 1 domain; sequence SADPELALALRVSMEEQRQR. The interval 216 to 220 is essential for ubiquitin-binding; sequence LALAL. Residues 224-237 are compositionally biased toward basic and acidic residues; that stretch reads MEEQRQRQEEEARR. The segment at 224–255 is disordered; it reads MEEQRQRQEEEARRAAAASAAEAGIATTGTED. Phosphothreonine occurs at positions 250 and 253. S256 and S266 each carry phosphoserine. Positions 282–301 constitute a UIM 2 domain; that stretch reads TEEEQIAYAMQMSLQGAEFG. The tract at residues 287-291 is essential for ubiquitin-binding; that stretch reads IAYAM. 2 disordered regions span residues 300 to 327 and 341 to 377; these read FGQA…DDYD and NLPG…EDKK. Phosphoserine occurs at positions 358 and 361. Residues 365-377 show a composition bias toward basic and acidic residues; it reads KDGKKDKKEEDKK.

This sequence belongs to the proteasome subunit S5A family. As to quaternary structure, component of the 19S proteasome regulatory particle complex. The 26S proteasome consists of a 20S core particle (CP) and two 19S regulatory subunits (RP). The regulatory particle is made of a lid composed of 9 subunits, a base containing 6 ATPases and few additional components including PSMD4. Interacts with NUB1. Interacts with SQSTM1. Interacts with UBQLN4. Interacts with UBE3A. Interacts with UBQLN1 (via ubiquitin-like domain). Interacts with DDI2.

Component of the 26S proteasome, a multiprotein complex involved in the ATP-dependent degradation of ubiquitinated proteins. This complex plays a key role in the maintenance of protein homeostasis by removing misfolded or damaged proteins, which could impair cellular functions, and by removing proteins whose functions are no longer required. Therefore, the proteasome participates in numerous cellular processes, including cell cycle progression, apoptosis, or DNA damage repair. PSMD4 acts as an ubiquitin receptor subunit through ubiquitin-interacting motifs and selects ubiquitin-conjugates for destruction. Displays a preferred selectivity for longer polyubiquitin chains. This chain is 26S proteasome non-ATPase regulatory subunit 4 (PSMD4), found in Homo sapiens (Human).